The following is a 506-amino-acid chain: Maturase K (506 aa).

This sequence belongs to the intron maturase 2 family. MatK subfamily.

It localises to the plastid. The protein localises to the chloroplast. Its function is as follows. Usually encoded in the trnK tRNA gene intron. Probably assists in splicing its own and other chloroplast group II introns. This is Maturase K from Pisum sativum (Garden pea).